The sequence spans 472 residues: ATP-dependent rRNA helicase rrp3 (472 aa).

Residues 1–52 (MPAIKKRKIAREAPQQEDHSDSEAHSSASEDAAPNTTEQEQEPSEAPKQAPK) are disordered. The segment covering 10–24 (AREAPQQEDHSDSEA) has biased composition (basic and acidic residues). The short motif at 52 to 80 (KSFKELGLIEQLCEACDSMGYKAPTAIQA) is the Q motif element. The region spanning 83–254 (IPLALQGRDL…RASLQNPLRV (172 aa)) is the Helicase ATP-binding domain. Position 96 to 103 (96 to 103 (AETGSGKT)) interacts with ATP. The DEAD box signature appears at 202–205 (DEAD). One can recognise a Helicase C-terminal domain in the interval 282 to 426 (YLVYLLNEFV…EYPAEKDEVM (145 aa)). The segment at 443–472 (MKNYDEKKGSRGKKFAKGKRSREDMDQEEG) is disordered. The segment covering 452 to 462 (SRGKKFAKGKR) has biased composition (basic residues).

This sequence belongs to the DEAD box helicase family. DDX47/RRP3 subfamily. Interacts with the SSU processome.

It is found in the nucleus. It catalyses the reaction ATP + H2O = ADP + phosphate + H(+). ATP-dependent rRNA helicase required for pre-ribosomal RNA processing. Involved in the maturation of the 35S-pre-rRNA and to its cleavage to mature 18S rRNA. This Aspergillus oryzae (strain ATCC 42149 / RIB 40) (Yellow koji mold) protein is ATP-dependent rRNA helicase rrp3.